Here is a 407-residue protein sequence, read N- to C-terminus: Proteasome-activating nucleotidase (407 aa).

Residues 22 to 67 (KEKTQIAELESKVLRLELKNKDINRENVQIKKENEILKRELDKLRI) are a coiled coil. Residues 192–197 (GTGKTL) and His331 each bind ATP. Residues 405 to 407 (MYG) are docks into pockets in the proteasome alpha-ring to cause gate opening.

It belongs to the AAA ATPase family. As to quaternary structure, homohexamer. The hexameric complex has a two-ring architecture resembling a top hat that caps the 20S proteasome core at one or both ends. Upon ATP-binding, the C-terminus of PAN interacts with the alpha-rings of the proteasome core by binding to the intersubunit pockets.

It is found in the cytoplasm. Functionally, ATPase which is responsible for recognizing, binding, unfolding and translocation of substrate proteins into the archaeal 20S proteasome core particle. Is essential for opening the gate of the 20S proteasome via an interaction with its C-terminus, thereby allowing substrate entry and access to the site of proteolysis. Thus, the C-termini of the proteasomal ATPase function like a 'key in a lock' to induce gate opening and therefore regulate proteolysis. Unfolding activity requires energy from ATP hydrolysis, whereas ATP binding alone promotes ATPase-20S proteasome association which triggers gate opening, and supports translocation of unfolded substrates. In Methanococcus maripaludis (strain DSM 14266 / JCM 13030 / NBRC 101832 / S2 / LL), this protein is Proteasome-activating nucleotidase.